The sequence spans 361 residues: Phospho-N-acetylmuramoyl-pentapeptide-transferase (361 aa).

The next 10 membrane-spanning stretches (helical) occupy residues 18-38, 73-93, 97-117, 135-155, 168-188, 196-216, 235-255, 263-283, 288-308, and 338-358; these read VFNYLTFRSIVSALTALILVL, TMGGVLIIVAIVISVLLWGDL, FIWVILLVTVAFSAIGWMDDY, LLQSIIGALAAVYLYFSATTG, VLPNLGLFYIVLAYFVIVGSS, GLDGLALMPTVMIGAALGVFA, GAGEVVVFCSALVGAGLGFLW, VFMGDVGSLGLGAALGVTAVV, LVYFLMGGIFVAETLSVILQV, and KVIVRFWIITFILVLCGLATL.

The protein belongs to the glycosyltransferase 4 family. MraY subfamily. Mg(2+) serves as cofactor.

The protein localises to the cell inner membrane. It carries out the reaction UDP-N-acetyl-alpha-D-muramoyl-L-alanyl-gamma-D-glutamyl-meso-2,6-diaminopimeloyl-D-alanyl-D-alanine + di-trans,octa-cis-undecaprenyl phosphate = di-trans,octa-cis-undecaprenyl diphospho-N-acetyl-alpha-D-muramoyl-L-alanyl-D-glutamyl-meso-2,6-diaminopimeloyl-D-alanyl-D-alanine + UMP. Its pathway is cell wall biogenesis; peptidoglycan biosynthesis. Catalyzes the initial step of the lipid cycle reactions in the biosynthesis of the cell wall peptidoglycan: transfers peptidoglycan precursor phospho-MurNAc-pentapeptide from UDP-MurNAc-pentapeptide onto the lipid carrier undecaprenyl phosphate, yielding undecaprenyl-pyrophosphoryl-MurNAc-pentapeptide, known as lipid I. This chain is Phospho-N-acetylmuramoyl-pentapeptide-transferase, found in Coxiella burnetii (strain CbuK_Q154) (Coxiella burnetii (strain Q154)).